The following is an 845-amino-acid chain: Beta-mannosidase B (845 aa).

E432 functions as the Proton donor in the catalytic mechanism. N-linked (GlcNAc...) asparagine glycans are attached at residues N717 and N723.

The protein belongs to the glycosyl hydrolase 2 family. Beta-mannosidase B subfamily.

The catalysed reaction is Hydrolysis of terminal, non-reducing beta-D-mannose residues in beta-D-mannosides.. Its pathway is glycan metabolism; N-glycan degradation. Its function is as follows. Exoglycosidase that cleaves the single beta-linked mannose residue from the non-reducing end of beta-mannosidic oligosaccharides of various complexity and length. Prefers mannobiose over mannotriose and has no activity against polymeric mannan. Is also severely restricted by galactosyl substitutions at the +1 subsite. This Aspergillus clavatus (strain ATCC 1007 / CBS 513.65 / DSM 816 / NCTC 3887 / NRRL 1 / QM 1276 / 107) protein is Beta-mannosidase B (mndB).